The sequence spans 459 residues: Cysteine--tRNA ligase (459 aa).

Cys28 contacts Zn(2+). Positions 30–40 (VTIYDLCHIGH) match the 'HIGH' region motif. 3 residues coordinate Zn(2+): Cys209, His234, and Glu238. Positions 266 to 270 (KMSKS) match the 'KMSKS' region motif. Lys269 provides a ligand contact to ATP.

The protein belongs to the class-I aminoacyl-tRNA synthetase family. Monomer. Requires Zn(2+) as cofactor.

It localises to the cytoplasm. It catalyses the reaction tRNA(Cys) + L-cysteine + ATP = L-cysteinyl-tRNA(Cys) + AMP + diphosphate. The protein is Cysteine--tRNA ligase of Shewanella pealeana (strain ATCC 700345 / ANG-SQ1).